Here is a 505-residue protein sequence, read N- to C-terminus: MEEYQGYLELNKFRQNDFLYPLIFQEYIYALAHDQILKKCILSDNLSYDNKSSSLIVKRLITQMSQLNHLIISDNDSNQNTFLGHTKNLDYQNKMISEGFAVVVEIQFSLRLVFSLERREIVKSQNLRSIHSIFPFLEDNFLHLNYVSDILIPHPIHLEILVQTLRYWVKDASSLHLLRFFLYEYQNRTSLITSTPKKAISIVSKGNHRLFLILYNSYLCEYESIFIFICNQSSHLRSISSGTLFERIYFYGKIKNLVEVFYTDFPTVLWLFKAPFMYYVRYQGKSILASNGAPLLLNKWKYYLVNFWQCNFYLWSQPGRIHINQLSKNSLNFLGYLSSVRLNPSAVRSQMLENSFIMDNAIKKFDIIVPIIPLIRSLAKAKFCNLVGDPISKPAWADSSDSYIIDRFVRICRNIYHYHSGSSKKNCLYRVKYILRLSCARTLARKHKSTVRAFLKRLGSGLLEEFLTEDDSLIFPRTSSPLWRLYRGRVWYLDIICINDLVNHE.

Belongs to the intron maturase 2 family. MatK subfamily.

It is found in the plastid. The protein localises to the chloroplast. Its function is as follows. Usually encoded in the trnK tRNA gene intron. Probably assists in splicing its own and other chloroplast group II introns. The chain is Maturase K from Micranthes integrifolia (Wholeleaf saxifrage).